Here is an 89-residue protein sequence, read N- to C-terminus: Small ribosomal subunit protein bS18 (89 aa).

The segment covering 1-15 (MTTANTNETAAAAAA) has biased composition (low complexity). The tract at residues 1 to 22 (MTTANTNETAAAAAAKNRRNKK) is disordered.

This sequence belongs to the bacterial ribosomal protein bS18 family. Part of the 30S ribosomal subunit. Forms a tight heterodimer with protein bS6.

In terms of biological role, binds as a heterodimer with protein bS6 to the central domain of the 16S rRNA, where it helps stabilize the platform of the 30S subunit. The sequence is that of Small ribosomal subunit protein bS18 from Caldanaerobacter subterraneus subsp. tengcongensis (strain DSM 15242 / JCM 11007 / NBRC 100824 / MB4) (Thermoanaerobacter tengcongensis).